A 455-amino-acid polypeptide reads, in one-letter code: Transmembrane protease serine 5 (455 aa).

The Cytoplasmic portion of the chain corresponds to 1 to 49 (MSPTLDDQSPMEIRCTEEGAGPGIFRMELGDQRQSISQSQRWCCLQRGC). A helical; Signal-anchor for type II membrane protein transmembrane segment spans residues 50–70 (VILGVLGLLAGAGIASWLLVL). Residues 71–455 (YLWPAASPSI…DWIHDTVQVR (385 aa)) are Extracellular-facing. The 96-residue stretch at 112–207 (FRINGEDLLL…SGRIVSLKCS (96 aa)) folds into the SRCR domain. 7 disulfides stabilise this stretch: cysteine 135/cysteine 196, cysteine 148/cysteine 206, cysteine 209/cysteine 328, cysteine 243/cysteine 259, cysteine 342/cysteine 411, cysteine 374/cysteine 390, and cysteine 401/cysteine 429. N-linked (GlcNAc...) asparagine glycans are attached at residues asparagine 163 and asparagine 170. One can recognise a Peptidase S1 domain in the interval 218–453 (IVGGQAVASG…FLDWIHDTVQ (236 aa)). Catalysis depends on charge relay system residues histidine 258 and aspartate 308. Asparagine 319 and asparagine 375 each carry an N-linked (GlcNAc...) asparagine glycan. The active-site Charge relay system is the serine 405.

Belongs to the peptidase S1 family.

It is found in the cell membrane. May play a role in hearing. This chain is Transmembrane protease serine 5 (Tmprss5), found in Mus musculus (Mouse).